A 475-amino-acid chain; its full sequence is uncharacterized protein (475 aa).

The protein to E.coli YihN.

This is an uncharacterized protein from Mycoplasma pneumoniae (strain ATCC 29342 / M129 / Subtype 1) (Mycoplasmoides pneumoniae).